Here is a 356-residue protein sequence, read N- to C-terminus: 5-formaminoimidazole-4-carboxamide-1-(beta)-D-ribofuranosyl 5'-monophosphate synthetase 1 (356 aa).

Positions 27 and 94 each coordinate 5-amino-1-(5-phospho-beta-D-ribosyl)imidazole-4-carboxamide. The ATP-grasp domain occupies 101–333 (TENFAEMAVP…YADLIQEDLS (233 aa)). ATP-binding positions include 145–196 (PRDI…TRYY) and E226. N255 serves as a coordination point for 5-amino-1-(5-phospho-beta-D-ribosyl)imidazole-4-carboxamide. The Mg(2+) site is built by E293 and E306.

Belongs to the phosphohexose mutase family. It depends on Mg(2+) as a cofactor. Requires Mn(2+) as cofactor.

It carries out the reaction 5-amino-1-(5-phospho-beta-D-ribosyl)imidazole-4-carboxamide + formate + ATP = 5-formamido-1-(5-phospho-D-ribosyl)imidazole-4-carboxamide + ADP + phosphate. It participates in purine metabolism; IMP biosynthesis via de novo pathway; 5-formamido-1-(5-phospho-D-ribosyl)imidazole-4-carboxamide from 5-amino-1-(5-phospho-D-ribosyl)imidazole-4-carboxamide (formate route): step 1/1. In terms of biological role, catalyzes the ATP- and formate-dependent formylation of 5-aminoimidazole-4-carboxamide-1-beta-d-ribofuranosyl 5'-monophosphate (AICAR) to 5-formaminoimidazole-4-carboxamide-1-beta-d-ribofuranosyl 5'-monophosphate (FAICAR) in the absence of folates. The polypeptide is 5-formaminoimidazole-4-carboxamide-1-(beta)-D-ribofuranosyl 5'-monophosphate synthetase 1 (Methanosarcina mazei (strain ATCC BAA-159 / DSM 3647 / Goe1 / Go1 / JCM 11833 / OCM 88) (Methanosarcina frisia)).